Here is a 137-residue protein sequence, read N- to C-terminus: Crustacean calcium-binding protein 23 (137 aa).

EF-hand domains are found at residues 27–48 (RDSS…FGLD), 62–97 (EKKA…KVVK), and 100–135 (ATEE…YSGL).

In terms of assembly, monomer or disulfide-linked dimers.

Functionally, possibly acts as a regulatory protein and not as a calcium buffer or transport protein. This chain is Crustacean calcium-binding protein 23, found in Homarus americanus (American lobster).